The following is a 106-amino-acid chain: Envelope small membrane protein (106 aa).

The Virion surface portion of the chain corresponds to 1–11 (MMNLLNTSLEE). A helical membrane pass occupies residues 12-32 (NGSFLTALYVICEFVALYLLG). At 33–106 (RALQAFVQAA…ANFQNGKLHT (74 aa)) the chain is on the intravirion side.

It belongs to the gammacoronaviruses E protein family. As to quaternary structure, homooligomer. Interacts with the M membrane protein in the budding compartment of the host cell, which is located between endoplasmic reticulum and the Golgi complex. The cytoplasmic tails of both proteins are important for this function. Interacts with Nucleoprotein.

It localises to the host Golgi apparatus membrane. Functionally, plays a central role in virus morphogenesis and assembly. Acts as a viroporin and self-assembles in host membranes forming pentameric protein-lipid pores that allow ion transport. Also plays a role in the induction of apoptosis. The chain is Envelope small membrane protein from Gallus gallus (Chicken).